We begin with the raw amino-acid sequence, 114 residues long: Small ribosomal subunit protein bS6 (114 aa).

It belongs to the bacterial ribosomal protein bS6 family.

In terms of biological role, binds together with bS18 to 16S ribosomal RNA. The polypeptide is Small ribosomal subunit protein bS6 (Thermosynechococcus vestitus (strain NIES-2133 / IAM M-273 / BP-1)).